A 363-amino-acid polypeptide reads, in one-letter code: Phospho-N-acetylmuramoyl-pentapeptide-transferase (363 aa).

10 helical membrane-spanning segments follow: residues 33 to 53 (YAVL…GVLP), 82 to 102 (GVIF…PSFV), 105 to 125 (LILL…CAQV), 133 to 153 (GALD…FYFH), 166 to 186 (PVFV…WMSI), 198 to 218 (LSGA…YFLL), 227 to 247 (LLVP…ALAG), 271 to 291 (ALGF…LLLM), 295 to 315 (VILV…FFHV), and 340 to 360 (VLLR…GVLF).

The protein belongs to the glycosyltransferase 4 family. MraY subfamily. The cofactor is Mg(2+).

It localises to the cell inner membrane. It carries out the reaction UDP-N-acetyl-alpha-D-muramoyl-L-alanyl-gamma-D-glutamyl-meso-2,6-diaminopimeloyl-D-alanyl-D-alanine + di-trans,octa-cis-undecaprenyl phosphate = di-trans,octa-cis-undecaprenyl diphospho-N-acetyl-alpha-D-muramoyl-L-alanyl-D-glutamyl-meso-2,6-diaminopimeloyl-D-alanyl-D-alanine + UMP. It participates in cell wall biogenesis; peptidoglycan biosynthesis. In terms of biological role, catalyzes the initial step of the lipid cycle reactions in the biosynthesis of the cell wall peptidoglycan: transfers peptidoglycan precursor phospho-MurNAc-pentapeptide from UDP-MurNAc-pentapeptide onto the lipid carrier undecaprenyl phosphate, yielding undecaprenyl-pyrophosphoryl-MurNAc-pentapeptide, known as lipid I. The protein is Phospho-N-acetylmuramoyl-pentapeptide-transferase of Treponema pallidum (strain Nichols).